The sequence spans 52 residues: Large ribosomal subunit protein bL33 (52 aa).

This sequence belongs to the bacterial ribosomal protein bL33 family.

This is Large ribosomal subunit protein bL33 from Campylobacter jejuni subsp. doylei (strain ATCC BAA-1458 / RM4099 / 269.97).